A 454-amino-acid polypeptide reads, in one-letter code: Bifunctional protein GlmU (454 aa).

Residues 1-226 (MALNVVILAA…AIEVEGANNR (226 aa)) are pyrophosphorylase. UDP-N-acetyl-alpha-D-glucosamine contacts are provided by residues 8 to 11 (LAAG), lysine 22, glutamine 73, 78 to 79 (GT), 100 to 102 (YGD), glycine 137, glutamate 151, asparagine 166, and asparagine 224. Aspartate 102 serves as a coordination point for Mg(2+). Residue asparagine 224 coordinates Mg(2+). Positions 227 to 247 (VQLAQLERAYQAREAEKLMIA) are linker. The N-acetyltransferase stretch occupies residues 248–454 (GANLRDPSRI…GWQRPVKIKK (207 aa)). Positions 330 and 348 each coordinate UDP-N-acetyl-alpha-D-glucosamine. The Proton acceptor role is filled by histidine 360. 2 residues coordinate UDP-N-acetyl-alpha-D-glucosamine: tyrosine 363 and asparagine 374. Acetyl-CoA is bound by residues alanine 377, 383-384 (NY), serine 402, alanine 420, and arginine 437.

In the N-terminal section; belongs to the N-acetylglucosamine-1-phosphate uridyltransferase family. This sequence in the C-terminal section; belongs to the transferase hexapeptide repeat family. In terms of assembly, homotrimer. It depends on Mg(2+) as a cofactor.

The protein resides in the cytoplasm. The catalysed reaction is alpha-D-glucosamine 1-phosphate + acetyl-CoA = N-acetyl-alpha-D-glucosamine 1-phosphate + CoA + H(+). The enzyme catalyses N-acetyl-alpha-D-glucosamine 1-phosphate + UTP + H(+) = UDP-N-acetyl-alpha-D-glucosamine + diphosphate. It functions in the pathway nucleotide-sugar biosynthesis; UDP-N-acetyl-alpha-D-glucosamine biosynthesis; N-acetyl-alpha-D-glucosamine 1-phosphate from alpha-D-glucosamine 6-phosphate (route II): step 2/2. The protein operates within nucleotide-sugar biosynthesis; UDP-N-acetyl-alpha-D-glucosamine biosynthesis; UDP-N-acetyl-alpha-D-glucosamine from N-acetyl-alpha-D-glucosamine 1-phosphate: step 1/1. Its pathway is bacterial outer membrane biogenesis; LPS lipid A biosynthesis. Its function is as follows. Catalyzes the last two sequential reactions in the de novo biosynthetic pathway for UDP-N-acetylglucosamine (UDP-GlcNAc). The C-terminal domain catalyzes the transfer of acetyl group from acetyl coenzyme A to glucosamine-1-phosphate (GlcN-1-P) to produce N-acetylglucosamine-1-phosphate (GlcNAc-1-P), which is converted into UDP-GlcNAc by the transfer of uridine 5-monophosphate (from uridine 5-triphosphate), a reaction catalyzed by the N-terminal domain. In Shewanella oneidensis (strain ATCC 700550 / JCM 31522 / CIP 106686 / LMG 19005 / NCIMB 14063 / MR-1), this protein is Bifunctional protein GlmU.